A 428-amino-acid chain; its full sequence is Elongation factor 1-alpha (428 aa).

In terms of domain architecture, tr-type G spans 5-225; it reads KPILNVAFIG…DAFQPPEKPT (221 aa). The G1 stretch occupies residues 14–21; the sequence is GHVDAGKS. 14–21 contacts GTP; sequence GHVDAGKS. Mg(2+) is bound at residue Ser21. Residues 70–74 form a G2 region; the sequence is GVTID. Positions 91-94 are G3; it reads DCPG. GTP contacts are provided by residues 91–95 and 149–152; these read DCPGH and NKMD. The G4 stretch occupies residues 149–152; it reads NKMD. The G5 stretch occupies residues 189–191; it reads ASL.

Belongs to the TRAFAC class translation factor GTPase superfamily. Classic translation factor GTPase family. EF-Tu/EF-1A subfamily.

The protein localises to the cytoplasm. The enzyme catalyses GTP + H2O = GDP + phosphate + H(+). GTP hydrolase that promotes the GTP-dependent binding of aminoacyl-tRNA to the A-site of ribosomes during protein biosynthesis. The sequence is that of Elongation factor 1-alpha from Methanococcus maripaludis (strain C7 / ATCC BAA-1331).